The primary structure comprises 270 residues: Pancreas transcription factor 1 subunit alpha (270 aa).

Residues 119–171 (QLRQAANVRERRRMQSINDAFEGLRSHIPTLPYEKRLSKVDTLRLAIGYINFL) enclose the bHLH domain.

The protein localises to the nucleus. Its function is as follows. Transcription factor implicated in the cell fate determination in various organs. Binds to the E-box consensus sequence 5'-CANNTG-3'. Acts together with pdx1 to induce the pancreatic lineage within the endoderm. Plays a central role in directing the differentiation of retinal progenitors towards horizontal and amacrine fates. This is Pancreas transcription factor 1 subunit alpha (ptf1a) from Xenopus laevis (African clawed frog).